A 241-amino-acid chain; its full sequence is ATP synthase subunit a (241 aa).

5 helical membrane-spanning segments follow: residues 30–50, 91–111, 128–148, 193–213, and 214–234; these read GQVF…VVVG, FIGT…LIPW, INTT…AGLS, LVVA…VMFL, and GLFT…YYIG.

It belongs to the ATPase A chain family. As to quaternary structure, F-type ATPases have 2 components, CF(1) - the catalytic core - and CF(0) - the membrane proton channel. CF(1) has five subunits: alpha(3), beta(3), gamma(1), delta(1), epsilon(1). CF(0) has four main subunits: a, b, b' and c.

Its subcellular location is the cellular thylakoid membrane. In terms of biological role, key component of the proton channel; it plays a direct role in the translocation of protons across the membrane. This chain is ATP synthase subunit a, found in Prochlorococcus marinus (strain SARG / CCMP1375 / SS120).